We begin with the raw amino-acid sequence, 386 residues long: Orphan methyltransferase M.SssI (386 aa).

The SAM-dependent MTase C5-type domain occupies 11-386 (LRVFEAFAGI…LEAIIDKIGG (376 aa)). Cys141 is a catalytic residue.

This sequence belongs to the class I-like SAM-binding methyltransferase superfamily. C5-methyltransferase family.

It catalyses the reaction a 2'-deoxycytidine in DNA + S-adenosyl-L-methionine = a 5-methyl-2'-deoxycytidine in DNA + S-adenosyl-L-homocysteine + H(+). Functionally, this de novo methylase acts completely and exclusively on CG residues in DNA; methylates unmethylated and hemi-methylated DNA. This is Orphan methyltransferase M.SssI (sssIM) from Spiroplasma monobiae (strain ATCC 33825 / MQ-1).